The primary structure comprises 291 residues: Methionine aminopeptidase (291 aa).

His-118 provides a ligand contact to substrate. Asp-135, Asp-146, and His-209 together coordinate a divalent metal cation. His-216 is a substrate binding site. A divalent metal cation-binding residues include Glu-241 and Glu-273.

This sequence belongs to the peptidase M24A family. Methionine aminopeptidase type 1 subfamily. As to quaternary structure, monomer. Requires Co(2+) as cofactor. It depends on Zn(2+) as a cofactor. Mn(2+) is required as a cofactor. Fe(2+) serves as cofactor.

The catalysed reaction is Release of N-terminal amino acids, preferentially methionine, from peptides and arylamides.. In terms of biological role, removes the N-terminal methionine from nascent proteins. The N-terminal methionine is often cleaved when the second residue in the primary sequence is small and uncharged (Met-Ala-, Cys, Gly, Pro, Ser, Thr, or Val). Requires deformylation of the N(alpha)-formylated initiator methionine before it can be hydrolyzed. The chain is Methionine aminopeptidase from Chlamydia muridarum (strain MoPn / Nigg).